Consider the following 372-residue polypeptide: N-methyl-L-tryptophan oxidase (372 aa).

Residue 4 to 34 participates in FAD binding; it reads DLIIIGSGSVGAAAGYYATRAGLNVLMTDAH. C308 bears the S-8alpha-FAD cysteine mark.

It belongs to the MSOX/MTOX family. MTOX subfamily. In terms of assembly, monomer. It depends on FAD as a cofactor.

It carries out the reaction N(alpha)-methyl-L-tryptophan + O2 + H2O = L-tryptophan + formaldehyde + H2O2. Catalyzes the oxidative demethylation of N-methyl-L-tryptophan. The protein is N-methyl-L-tryptophan oxidase of Escherichia coli O139:H28 (strain E24377A / ETEC).